A 567-amino-acid chain; its full sequence is Mitochondrial distribution and morphology protein 34 (567 aa).

Residues 1 to 224 (MSFKFNEESF…LPSALFNMSR (224 aa)) enclose the SMP-LTD domain. Polar residues predominate over residues 392–416 (NKATETSSNLNADSEITPVSSSHNA). Residues 392-453 (NKATETSSNL…NRSSSFTSSI (62 aa)) form a disordered region. The span at 417–452 (TSSVNTITSLTTSSLGSTAGSSNSKNTNRSSSFTSS) shows a compositional bias: low complexity.

The protein belongs to the MDM34 family. As to quaternary structure, component of the ER-mitochondria encounter structure (ERMES) or MDM complex, composed of MMM1, MDM10, MDM12 and MDM34.

It is found in the mitochondrion outer membrane. Its function is as follows. Component of the ERMES/MDM complex, which serves as a molecular tether to connect the endoplasmic reticulum (ER) and mitochondria. Components of this complex are involved in the control of mitochondrial shape and protein biogenesis, and function in nonvesicular lipid trafficking between the ER and mitochondria. MDM34 is required for the interaction of the ER-resident membrane protein MMM1 and the outer mitochondrial membrane-resident beta-barrel protein MDM10. The sequence is that of Mitochondrial distribution and morphology protein 34 from Vanderwaltozyma polyspora (strain ATCC 22028 / DSM 70294 / BCRC 21397 / CBS 2163 / NBRC 10782 / NRRL Y-8283 / UCD 57-17) (Kluyveromyces polysporus).